Reading from the N-terminus, the 876-residue chain is E3 ubiquitin-protein ligase TRIM71 (876 aa).

The segment at 12-90 (CPLCKEMCGS…ALKLRCPICD (79 aa)) adopts an RING-type zinc-finger fold. The segment covering 26–40 (SSNSSTSSSSSQTSG) has biased composition (low complexity). 2 disordered regions span residues 26–46 (SSNSSTSSSSSQTSGSSGGGG) and 128–192 (KNGR…AALL). Residues 137–148 (PAAGSGAGGGGA) are compositionally biased toward gly residues. Low complexity predominate over residues 160–182 (RAAAAASSPAAGSAAPSASSSSS). The B box-type 1; atypical zinc finger occupies 200–247 (QGEPRCSSCDEGNAASSRCLDCQEHLCDNCVRAHQRVRLTKDHFIERF). Zn(2+)-binding residues include C205, C208, C229, H233, C286, H289, C309, and H314. A B box-type 2 zinc finger spans residues 281–322 (ERASYCQHHDDEVLHFYCDTCSVPICRECTMGRHVGHSFIYL). 2 coiled-coil regions span residues 344–373 (RQAIQLSIEQAQAVAEQVEMKAKVVQSEVK) and 399–434 (QVKAKSLYLQVEKLRQNLNKLDNTISAVQQVLEEGR). One copy of the Filamin repeat lies at 487–588 (SSGAFAPLTK…IENSPFKVVV (102 aa)). 6 NHL repeats span residues 601 to 644 (GLSF…FKPC), 648 to 691 (HHKF…FTFE), 695 to 738 (ILKF…FGPD), 742 to 785 (LNKY…IHAD), 789 to 832 (ARFL…FESN), and 836 to 876 (LCKF…ILVF).

It belongs to the TRIM/RBCC family.

The protein localises to the cytoplasm. The protein resides in the P-body. It carries out the reaction S-ubiquitinyl-[E2 ubiquitin-conjugating enzyme]-L-cysteine + [acceptor protein]-L-lysine = [E2 ubiquitin-conjugating enzyme]-L-cysteine + N(6)-ubiquitinyl-[acceptor protein]-L-lysine.. The protein operates within protein modification; protein ubiquitination. Functionally, E3 ubiquitin-protein ligase that cooperates with the microRNAs (miRNAs) machinery and promotes embryonic stem cells proliferation and maintenance. Binds to miRNAs and participates in post-transcriptional repression of transcripts. Required to maintain proliferation and prevent premature differentiation of neural progenitor cells during early neural development. This chain is E3 ubiquitin-protein ligase TRIM71 (TRIM71), found in Gallus gallus (Chicken).